A 133-amino-acid chain; its full sequence is Profilin-4 (133 aa).

An intrachain disulfide couples Cys-13 to Cys-117. Positions 83–99 (AVIRGKKGSGGITIKKT) match the Involved in PIP2 interaction motif. A Phosphothreonine modification is found at Thr-113.

The protein belongs to the profilin family. In terms of assembly, occurs in many kinds of cells as a complex with monomeric actin in a 1:1 ratio. Phosphorylated by MAP kinases.

The protein resides in the cytoplasm. It localises to the cytoskeleton. In terms of biological role, binds to actin and affects the structure of the cytoskeleton. At high concentrations, profilin prevents the polymerization of actin, whereas it enhances it at low concentrations. This chain is Profilin-4, found in Corylus avellana (European hazel).